We begin with the raw amino-acid sequence, 293 residues long: Nucleotide-binding protein HRM2_27900 (293 aa).

Residue 11–18 (GLSGSGKS) participates in ATP binding. A GTP-binding site is contributed by 62-65 (DIRA).

Belongs to the RapZ-like family.

Functionally, displays ATPase and GTPase activities. This is Nucleotide-binding protein HRM2_27900 from Desulforapulum autotrophicum (strain ATCC 43914 / DSM 3382 / VKM B-1955 / HRM2) (Desulfobacterium autotrophicum).